The sequence spans 883 residues: Alanine--tRNA ligase (883 aa).

Histidine 563, histidine 567, cysteine 677, and histidine 681 together coordinate Zn(2+).

It belongs to the class-II aminoacyl-tRNA synthetase family. Zn(2+) serves as cofactor.

It is found in the cytoplasm. The catalysed reaction is tRNA(Ala) + L-alanine + ATP = L-alanyl-tRNA(Ala) + AMP + diphosphate. Functionally, catalyzes the attachment of alanine to tRNA(Ala) in a two-step reaction: alanine is first activated by ATP to form Ala-AMP and then transferred to the acceptor end of tRNA(Ala). Also edits incorrectly charged Ser-tRNA(Ala) and Gly-tRNA(Ala) via its editing domain. The protein is Alanine--tRNA ligase of Cereibacter sphaeroides (strain ATCC 17029 / ATH 2.4.9) (Rhodobacter sphaeroides).